Reading from the N-terminus, the 284-residue chain is MGEIIKGKPVADKISEDLIQEIEGLKGKGIQPKLAIVRVGANSSDLAYEKGALGRSKKVGVETEVHELPEDITQDDFIKELKKLNEDKAVNGILIFRPLPEQLDESVIKYVIAPEKDIDCLSPINVGKMTEGDKTGFPPCTPTAVVEILKFYGVELQGKDCAIIGASMVVGKPAALLLLNENATISVCHIFTKDSAKIASQADVVVVGVGVPRLVKENWIANGAVVIDVGINVDKEGNMCGDVDFDGVKDKVSMITPVPGGVGSVTTSILAKHVVKACKQQNNL.

NADP(+) is bound by residues 165–167, Ile-190, and Ile-231; that span reads GAS.

Belongs to the tetrahydrofolate dehydrogenase/cyclohydrolase family. As to quaternary structure, homodimer.

It carries out the reaction (6R)-5,10-methylene-5,6,7,8-tetrahydrofolate + NADP(+) = (6R)-5,10-methenyltetrahydrofolate + NADPH. It catalyses the reaction (6R)-5,10-methenyltetrahydrofolate + H2O = (6R)-10-formyltetrahydrofolate + H(+). Its pathway is one-carbon metabolism; tetrahydrofolate interconversion. Catalyzes the oxidation of 5,10-methylenetetrahydrofolate to 5,10-methenyltetrahydrofolate and then the hydrolysis of 5,10-methenyltetrahydrofolate to 10-formyltetrahydrofolate. The protein is Bifunctional protein FolD of Alkaliphilus metalliredigens (strain QYMF).